We begin with the raw amino-acid sequence, 150 residues long: Transcriptional regulator MraZ (150 aa).

SpoVT-AbrB domains follow at residues 8–55 (FINN…GISH) and 84–127 (AVQL…QPQN).

Belongs to the MraZ family. In terms of assembly, forms oligomers.

It is found in the cytoplasm. It localises to the nucleoid. This Rickettsia bellii (strain OSU 85-389) protein is Transcriptional regulator MraZ.